The sequence spans 313 residues: Leucine-rich repeat-containing protein 52 (313 aa).

Residues 1–23 (MSLASGPGPGWLLFSFGMGLVSG) form the signal peptide. The LRRNT domain occupies 24-53 (SKCPNNCLCQAQEVICTGKQLTEYPLDIPL). Topologically, residues 24–244 (SKCPNNCLCQ…MCITHLDHKD (221 aa)) are extracellular. 2 disulfides stabilise this stretch: Cys-26–Cys-32 and Cys-30–Cys-39. LRR repeat units follow at residues 54-75 (NTRRLFLNENRITSLPAMHLGL), 78-99 (DLVYLDCQNNRIREVMDYTFIG), 102-123 (KLIYLDLSSNNLTSISPFTFSV), 126-148 (NLVQLNIANNPHLLSLHKFTFAN), and 151-172 (SLRYLDLRNTGLQTLDSAALYH). N-linked (GlcNAc...) asparagine glycans are attached at residues Asn-112 and Asn-148. The 55-residue stretch at 184–238 (NPWKCNCSFLDFAIFLIVFHMDPSDDLNATCVEPTELTGWPITRVGNPLRYMCIT) folds into the LRRCT domain. Disulfide bonds link Cys-188/Cys-214 and Cys-190/Cys-236. N-linked (GlcNAc...) asparagine glycans are attached at residues Asn-189 and Asn-211. Residues 245–265 (YIFLLLIGFCIFAAGTVAAWL) traverse the membrane as a helical segment. At 266–313 (TGVCAVLYQNTRHKSSEEDEDEAGTRVEVSRRIFQTQTSSVQEFPQLI) the chain is on the cytoplasmic side.

As to quaternary structure, may interact with KCNU1; this interaction may be required for LRRC52 stability and may change the channel gating properties. Interacts with KCNMA1. In terms of processing, N-glycosylated. Mainly expressed in testis and skeletal muscle.

It is found in the cell membrane. In terms of biological role, auxiliary protein of the large-conductance, voltage and calcium-activated potassium channel (BK alpha). Modulates gating properties by producing a marked shift in the BK channel's voltage dependence of activation in the hyperpolarizing direction, and in the absence of calcium. KCNU1 channel auxiliary protein. Modulates KCNU1 gating properties. This Homo sapiens (Human) protein is Leucine-rich repeat-containing protein 52 (LRRC52).